A 28-amino-acid polypeptide reads, in one-letter code: Ranatuerin-2AVb (28 aa).

Residues Cys-23 and Cys-28 are joined by a disulfide bond.

Expressed by the skin glands.

It is found in the secreted. Functionally, has antibacterial activity. The polypeptide is Ranatuerin-2AVb (Rana arvalis (Moor frog)).